Here is a 401-residue protein sequence, read N- to C-terminus: Succinyl-diaminopimelate desuccinylase (401 aa).

His-82 contributes to the Zn(2+) binding site. Residue Asp-84 is part of the active site. Asp-115 lines the Zn(2+) pocket. Glu-149 (proton acceptor) is an active-site residue. 3 residues coordinate Zn(2+): Glu-150, Glu-178, and His-364.

The protein belongs to the peptidase M20A family. DapE subfamily. As to quaternary structure, homodimer. It depends on Zn(2+) as a cofactor. Requires Co(2+) as cofactor.

It catalyses the reaction N-succinyl-(2S,6S)-2,6-diaminopimelate + H2O = (2S,6S)-2,6-diaminopimelate + succinate. Its pathway is amino-acid biosynthesis; L-lysine biosynthesis via DAP pathway; LL-2,6-diaminopimelate from (S)-tetrahydrodipicolinate (succinylase route): step 3/3. In terms of biological role, catalyzes the hydrolysis of N-succinyl-L,L-diaminopimelic acid (SDAP), forming succinate and LL-2,6-diaminopimelate (DAP), an intermediate involved in the bacterial biosynthesis of lysine and meso-diaminopimelic acid, an essential component of bacterial cell walls. In Verminephrobacter eiseniae (strain EF01-2), this protein is Succinyl-diaminopimelate desuccinylase.